The following is a 306-amino-acid chain: NAD kinase 1 (306 aa).

The active-site Proton acceptor is the Asp67. NAD(+) is bound by residues 67-68 (DG), 149-150 (ND), and Asp181.

It belongs to the NAD kinase family. A divalent metal cation is required as a cofactor.

It localises to the cytoplasm. The catalysed reaction is NAD(+) + ATP = ADP + NADP(+) + H(+). Its function is as follows. Involved in the regulation of the intracellular balance of NAD and NADP, and is a key enzyme in the biosynthesis of NADP. Catalyzes specifically the phosphorylation on 2'-hydroxyl of the adenosine moiety of NAD to yield NADP. This is NAD kinase 1 from Synechococcus sp. (strain ATCC 27144 / PCC 6301 / SAUG 1402/1) (Anacystis nidulans).